We begin with the raw amino-acid sequence, 620 residues long: Delta(14)-sterol reductase LBR (620 aa).

The Tudor domain maps to 1–62 (MPGRKFADGE…DIKPLKSFKQ (62 aa)). Over 1–215 (MPGRKFADGE…TPQRRDLEFG (215 aa)) the chain is Nuclear. The segment at 52–111 (SDIKPLKSFKQRKSGSTSSSPSRRRSSRSRSRSRSRSPGRAPKGSRRSVSASYQADAKEK) is disordered. Position 55 is an N6-acetyllysine (Lys55). Ser59 and Ser67 each carry phosphoserine. Phosphoserine; by CDK1 is present on residues Ser71 and Ser86. The segment covering 73–88 (SRRRSSRSRSRSRSRS) has biased composition (basic residues). At Ser88 the chain carries Phosphoserine. Residue Ser96 is glycosylated (O-linked (GlcNAc) serine). Phosphoserine occurs at positions 99 and 101. At Thr123 the chain carries Phosphothreonine. Ser133 is subject to Phosphoserine. Phosphothreonine is present on Thr205. 8 helical membrane passes run 216 to 236 (GVPG…LLLL), 263 to 283 (VCGV…LPVG), 304 to 324 (LYAF…DIEL), 331 to 351 (FLQF…YLYA), 452 to 472 (IIHD…VPFT), 486 to 506 (DLSW…YVIF), 525 to 547 (LAHL…WWGF), and 566 to 586 (PCGF…ALLI). An N6-acetyllysine mark is found at Lys599 and Lys606.

It belongs to the ERG4/ERG24 family. Interacts with CBX5. Interacts with DNA. Interaction with DNA is sequence independent with higher affinity for supercoiled and relaxed circular DNA than linear DNA. Interacts with lamin B. Interacts with CLNK. Interacts with TMEM147; promoting LBR localization to the nucleus inner membrane. Phosphorylated by CDK1 in mitosis when the inner nuclear membrane breaks down into vesicles that dissociate from the lamina and the chromatin. It is phosphorylated by different protein kinases in interphase when the membrane is associated with these structures. Phosphorylation of LBR and HP1 proteins may be responsible for some of the alterations in chromatin organization and nuclear structure which occur at various times during the cell cycle. Phosphorylated by SRPK1. In late anaphase LBR is dephosphorylated, probably by PP1 and/or PP2A, allowing reassociation with chromatin.

Its subcellular location is the nucleus inner membrane. It localises to the nucleus. It is found in the cytoplasm. The protein localises to the endoplasmic reticulum membrane. The catalysed reaction is 5alpha-cholest-8,14-dien-3beta-ol + NADPH + H(+) = 5alpha-cholest-8-en-3beta-ol + NADP(+). It carries out the reaction 4,4-dimethyl-5alpha-cholesta-8,24-dien-3beta-ol + NADP(+) = 4,4-dimethyl-5alpha-cholesta-8,14,24-trien-3beta-ol + NADPH + H(+). The enzyme catalyses 4,4-dimethyl-8,14-cholestadien-3beta-ol + NADPH + H(+) = 4,4-dimethyl-5alpha-cholest-8-en-3beta-ol + NADP(+). Its pathway is steroid biosynthesis; cholesterol biosynthesis. Its function is as follows. Catalyzes the reduction of the C14-unsaturated bond of lanosterol, as part of the metabolic pathway leading to cholesterol biosynthesis. Plays a critical role in myeloid cell cholesterol biosynthesis which is essential to both myeloid cell growth and functional maturation. Mediates the activation of NADPH oxidases, perhaps by maintaining critical levels of cholesterol required for membrane lipid raft formation during neutrophil differentiation. Anchors the lamina and the heterochromatin to the inner nuclear membrane. This Rattus norvegicus (Rat) protein is Delta(14)-sterol reductase LBR (Lbr).